Here is a 485-residue protein sequence, read N- to C-terminus: Glutamyl-tRNA(Gln) amidotransferase subunit A (485 aa).

Residues lysine 76 and serine 152 each act as charge relay system in the active site. The active-site Acyl-ester intermediate is serine 176.

Belongs to the amidase family. GatA subfamily. As to quaternary structure, heterotrimer of A, B and C subunits.

It catalyses the reaction L-glutamyl-tRNA(Gln) + L-glutamine + ATP + H2O = L-glutaminyl-tRNA(Gln) + L-glutamate + ADP + phosphate + H(+). Allows the formation of correctly charged Gln-tRNA(Gln) through the transamidation of misacylated Glu-tRNA(Gln) in organisms which lack glutaminyl-tRNA synthetase. The reaction takes place in the presence of glutamine and ATP through an activated gamma-phospho-Glu-tRNA(Gln). The chain is Glutamyl-tRNA(Gln) amidotransferase subunit A from Dechloromonas aromatica (strain RCB).